The sequence spans 406 residues: Succinylornithine transaminase (406 aa).

Lys252 is subject to N6-(pyridoxal phosphate)lysine.

This sequence belongs to the class-III pyridoxal-phosphate-dependent aminotransferase family. AstC subfamily. Requires pyridoxal 5'-phosphate as cofactor.

It carries out the reaction N(2)-succinyl-L-ornithine + 2-oxoglutarate = N-succinyl-L-glutamate 5-semialdehyde + L-glutamate. Its pathway is amino-acid degradation; L-arginine degradation via AST pathway; L-glutamate and succinate from L-arginine: step 3/5. In terms of biological role, catalyzes the transamination of N(2)-succinylornithine and alpha-ketoglutarate into N(2)-succinylglutamate semialdehyde and glutamate. Can also act as an acetylornithine aminotransferase. The sequence is that of Succinylornithine transaminase from Escherichia coli O127:H6 (strain E2348/69 / EPEC).